Reading from the N-terminus, the 317-residue chain is Lipoyl synthase (317 aa).

Cys-59, Cys-64, Cys-70, Cys-85, Cys-89, Cys-92, and Ser-298 together coordinate [4Fe-4S] cluster. The Radical SAM core domain maps to Trp-71 to Leu-287.

The protein belongs to the radical SAM superfamily. Lipoyl synthase family. Requires [4Fe-4S] cluster as cofactor.

The protein resides in the cytoplasm. The catalysed reaction is [[Fe-S] cluster scaffold protein carrying a second [4Fe-4S](2+) cluster] + N(6)-octanoyl-L-lysyl-[protein] + 2 oxidized [2Fe-2S]-[ferredoxin] + 2 S-adenosyl-L-methionine + 4 H(+) = [[Fe-S] cluster scaffold protein] + N(6)-[(R)-dihydrolipoyl]-L-lysyl-[protein] + 4 Fe(3+) + 2 hydrogen sulfide + 2 5'-deoxyadenosine + 2 L-methionine + 2 reduced [2Fe-2S]-[ferredoxin]. The protein operates within protein modification; protein lipoylation via endogenous pathway; protein N(6)-(lipoyl)lysine from octanoyl-[acyl-carrier-protein]: step 2/2. In terms of biological role, catalyzes the radical-mediated insertion of two sulfur atoms into the C-6 and C-8 positions of the octanoyl moiety bound to the lipoyl domains of lipoate-dependent enzymes, thereby converting the octanoylated domains into lipoylated derivatives. The protein is Lipoyl synthase of Bartonella bacilliformis (strain ATCC 35685 / KC583 / Herrer 020/F12,63).